Here is a 35-residue protein sequence, read N- to C-terminus: Photosystem II reaction center protein M (35 aa).

Residues 5 to 25 form a helical membrane-spanning segment; that stretch reads ILAFVATALFILIPTAFLLIL.

Belongs to the PsbM family. In terms of assembly, PSII is composed of 1 copy each of membrane proteins PsbA, PsbB, PsbC, PsbD, PsbE, PsbF, PsbH, PsbI, PsbJ, PsbK, PsbL, PsbM, PsbT, PsbX, PsbY, PsbZ, Psb30/Ycf12, at least 3 peripheral proteins of the oxygen-evolving complex and a large number of cofactors. It forms dimeric complexes.

The protein resides in the plastid. It is found in the chloroplast thylakoid membrane. Its function is as follows. One of the components of the core complex of photosystem II (PSII). PSII is a light-driven water:plastoquinone oxidoreductase that uses light energy to abstract electrons from H(2)O, generating O(2) and a proton gradient subsequently used for ATP formation. It consists of a core antenna complex that captures photons, and an electron transfer chain that converts photonic excitation into a charge separation. This subunit is found at the monomer-monomer interface. The chain is Photosystem II reaction center protein M from Adiantum capillus-veneris (Maidenhair fern).